The sequence spans 603 residues: Elongation factor 4 (603 aa).

Residues 6–188 enclose the tr-type G domain; it reads SKIRNFCIIA…QIVKKIPAPT (183 aa). Residues 18-23 and 135-138 each bind GTP; these read DHGKST and NKVD.

The protein belongs to the TRAFAC class translation factor GTPase superfamily. Classic translation factor GTPase family. LepA subfamily.

The protein localises to the cell membrane. It carries out the reaction GTP + H2O = GDP + phosphate + H(+). Functionally, required for accurate and efficient protein synthesis under certain stress conditions. May act as a fidelity factor of the translation reaction, by catalyzing a one-codon backward translocation of tRNAs on improperly translocated ribosomes. Back-translocation proceeds from a post-translocation (POST) complex to a pre-translocation (PRE) complex, thus giving elongation factor G a second chance to translocate the tRNAs correctly. Binds to ribosomes in a GTP-dependent manner. The sequence is that of Elongation factor 4 from Agathobacter rectalis (strain ATCC 33656 / DSM 3377 / JCM 17463 / KCTC 5835 / VPI 0990) (Eubacterium rectale).